A 407-amino-acid chain; its full sequence is Probable tRNA sulfurtransferase (407 aa).

The THUMP domain maps to 61–165; sequence NEITYRLSKI…LDAIYMYEEV (105 aa). ATP contacts are provided by residues 183 to 184, 208 to 209, R265, G287, and Q296; these read ML and HF.

This sequence belongs to the ThiI family.

It localises to the cytoplasm. It carries out the reaction [ThiI sulfur-carrier protein]-S-sulfanyl-L-cysteine + a uridine in tRNA + 2 reduced [2Fe-2S]-[ferredoxin] + ATP + H(+) = [ThiI sulfur-carrier protein]-L-cysteine + a 4-thiouridine in tRNA + 2 oxidized [2Fe-2S]-[ferredoxin] + AMP + diphosphate. The enzyme catalyses [ThiS sulfur-carrier protein]-C-terminal Gly-Gly-AMP + S-sulfanyl-L-cysteinyl-[cysteine desulfurase] + AH2 = [ThiS sulfur-carrier protein]-C-terminal-Gly-aminoethanethioate + L-cysteinyl-[cysteine desulfurase] + A + AMP + 2 H(+). It functions in the pathway cofactor biosynthesis; thiamine diphosphate biosynthesis. Functionally, catalyzes the ATP-dependent transfer of a sulfur to tRNA to produce 4-thiouridine in position 8 of tRNAs, which functions as a near-UV photosensor. Also catalyzes the transfer of sulfur to the sulfur carrier protein ThiS, forming ThiS-thiocarboxylate. This is a step in the synthesis of thiazole, in the thiamine biosynthesis pathway. The sulfur is donated as persulfide by IscS. This is Probable tRNA sulfurtransferase from Staphylococcus aureus (strain bovine RF122 / ET3-1).